The primary structure comprises 261 residues: Probable membrane transporter protein ORF9 (261 aa).

8 helical membrane passes run 8 to 28 (LLAFLFVAAFIAGFIDSIAGG), 29 to 49 (GGMITIPAMLIAGIPPLQTLG), 78 to 98 (LPMALMSAAGAVLGALLATIV), 100 to 120 (GDVLKAILPFLLIAIALYFGL), 133 to 151 (VTPFVFTLTLVPLIGFYDG), 152 to 171 (VFGPGTGSFFMLGFVTLAGF), 189 to 209 (VGAFGVFLFFGAVLWKVGLLM), and 231 to 251 (IIKPLLVIVSIALAIRLLADP).

Belongs to the 4-toluene sulfonate uptake permease (TSUP) (TC 2.A.102) family.

It is found in the cell membrane. The protein is Probable membrane transporter protein ORF9 of Sinorhizobium sp.